The primary structure comprises 233 residues: uncharacterized protein (233 aa).

This sequence belongs to the asfivirus H233R family.

This is an uncharacterized protein from African swine fever virus (isolate Warthog/Namibia/Wart80/1980) (ASFV).